Consider the following 446-residue polypeptide: ATP-dependent protease ATPase subunit HslU (446 aa).

Residues Val18, 60 to 65 (GVGKTE), Asp259, Glu324, and Arg396 contribute to the ATP site.

It belongs to the ClpX chaperone family. HslU subfamily. In terms of assembly, a double ring-shaped homohexamer of HslV is capped on each side by a ring-shaped HslU homohexamer. The assembly of the HslU/HslV complex is dependent on binding of ATP.

The protein resides in the cytoplasm. Its function is as follows. ATPase subunit of a proteasome-like degradation complex; this subunit has chaperone activity. The binding of ATP and its subsequent hydrolysis by HslU are essential for unfolding of protein substrates subsequently hydrolyzed by HslV. HslU recognizes the N-terminal part of its protein substrates and unfolds these before they are guided to HslV for hydrolysis. The sequence is that of ATP-dependent protease ATPase subunit HslU from Dechloromonas aromatica (strain RCB).